A 503-amino-acid polypeptide reads, in one-letter code: Capsanthin/capsorubin synthase, chromoplastic (503 aa).

Position 88–117 (88–117 (VIIIGTGPAGLRLAEQVSSRHSVKVCCVDP)) interacts with NAD(+).

It belongs to the lycopene cyclase family.

Its subcellular location is the plastid. It localises to the chromoplast. The catalysed reaction is all-trans-violaxanthin = all-trans-capsorubin. It catalyses the reaction all-trans-antheraxanthin = all-trans-capsanthin. Its pathway is carotenoid biosynthesis; capsanthin biosynthesis; capsanthin from antheraxanthin: step 1/1. It participates in carotenoid biosynthesis; capsorubin biosynthesis; capsorubin from violaxanthin: step 1/1. Its function is as follows. Catalyzes the conversion of the ubiquitous 5,6-epoxycarotenoids, antheraxanthin and violaxanthin, into capsanthin and capsorubin, respectively. The protein is Capsanthin/capsorubin synthase, chromoplastic (CCS) of Citrus sinensis (Sweet orange).